The primary structure comprises 272 residues: 1,4-dihydroxy-2-naphthoyl-CoA synthase (272 aa).

Substrate is bound by residues Arg33, 72–76, Tyr84, 116–120, Thr142, Ser148, Tyr245, and Lys260; these read SGGDQ and YAIGG. Residue 141 to 143 participates in hydrogencarbonate binding; sequence QTG.

This sequence belongs to the enoyl-CoA hydratase/isomerase family. MenB subfamily. Hydrogencarbonate is required as a cofactor.

It carries out the reaction 2-succinylbenzoyl-CoA + H(+) = 1,4-dihydroxy-2-naphthoyl-CoA + H2O. Its pathway is quinol/quinone metabolism; 1,4-dihydroxy-2-naphthoate biosynthesis; 1,4-dihydroxy-2-naphthoate from chorismate: step 6/7. The protein operates within quinol/quinone metabolism; menaquinone biosynthesis. Functionally, converts o-succinylbenzoyl-CoA (OSB-CoA) to 1,4-dihydroxy-2-naphthoyl-CoA (DHNA-CoA). This Staphylococcus epidermidis (strain ATCC 35984 / DSM 28319 / BCRC 17069 / CCUG 31568 / BM 3577 / RP62A) protein is 1,4-dihydroxy-2-naphthoyl-CoA synthase.